Here is a 325-residue protein sequence, read N- to C-terminus: DNA-directed RNA polymerase subunit alpha (325 aa).

The segment at 1–231 is alpha N-terminal domain (alpha-NTD); that stretch reads MQTSLLKPKI…DQLSVFAALE (231 aa). The tract at residues 246–325 is alpha C-terminal domain (alpha-CTD); the sequence is IDPILLRPVD…ENWPPAGLDK (80 aa).

It belongs to the RNA polymerase alpha chain family. Homodimer. The RNAP catalytic core consists of 2 alpha, 1 beta, 1 beta' and 1 omega subunit. When a sigma factor is associated with the core the holoenzyme is formed, which can initiate transcription.

It carries out the reaction RNA(n) + a ribonucleoside 5'-triphosphate = RNA(n+1) + diphosphate. DNA-dependent RNA polymerase catalyzes the transcription of DNA into RNA using the four ribonucleoside triphosphates as substrates. The protein is DNA-directed RNA polymerase subunit alpha of Burkholderia mallei (strain NCTC 10247).